We begin with the raw amino-acid sequence, 995 residues long: Epididymis-specific alpha-mannosidase (995 aa).

An N-terminal signal peptide occupies residues 1 to 21 (MGPHSWLPLFMQLALLGPQWA). Residues H36, D38, and D151 each contribute to the Zn(2+) site. D151 (nucleophile) is an active-site residue. The N-linked (GlcNAc...) asparagine glycan is linked to N285. Residue H411 participates in Zn(2+) binding. 7 N-linked (GlcNAc...) asparagine glycosylation sites follow: N593, N625, N657, N733, N793, N875, and N977. The segment at 956 to 977 (TEDGHHHRGSSRRPLPPLRGPN) is disordered.

This sequence belongs to the glycosyl hydrolase 38 family. Requires Zn(2+) as cofactor. Post-translationally, processed into a 27 kDa fragment localized on the equatorial segment and the apical rim of the head of mature sperm. As to expression, specific to the caput and corpus of the epididymis.

The protein resides in the secreted. The enzyme catalyses Hydrolysis of terminal, non-reducing alpha-D-mannose residues in alpha-D-mannosides.. Its function is as follows. Can digest both p-nitro-phenyl-alpha-D-mannoside and high mannose oligosaccharide (Man(8)-GlcNAc(2)). May be involved in sperm maturation. Has a possible role in specific sperm-egg interaction since sperm surface mannosidase acts like a receptor for mannose-containing oligosaccharides located on the zona pellucida. This is Epididymis-specific alpha-mannosidase (MAN2B2) from Sus scrofa (Pig).